Consider the following 211-residue polypeptide: uncharacterized protein (211 aa).

The first 20 residues, 1 to 20, serve as a signal peptide directing secretion; it reads MSRVQISTVLAIDTATPAVT.

To M.leprae ML0378.

This is an uncharacterized protein from Mycobacterium tuberculosis (strain CDC 1551 / Oshkosh).